A 216-amino-acid chain; its full sequence is Probable GTP-binding protein EngB (216 aa).

The EngB-type G domain occupies 27–201; sequence EGIEVAFAGR…SQKLNTWFNE (175 aa). GTP contacts are provided by residues 35–42, 62–66, 80–83, 147–150, and 180–182; these read GRSNAGKS, GRTQL, DLPG, TKAD, and FSS. Mg(2+)-binding residues include serine 42 and threonine 64.

It belongs to the TRAFAC class TrmE-Era-EngA-EngB-Septin-like GTPase superfamily. EngB GTPase family. Requires Mg(2+) as cofactor.

Functionally, necessary for normal cell division and for the maintenance of normal septation. This is Probable GTP-binding protein EngB from Serratia proteamaculans (strain 568).